The primary structure comprises 143 residues: MMKTLVVLAITLAVVSAGKVKFQDCGKGEVESLEVEGCSGDYCVIHKGKKLDLAISVTSNQDSANLKLDIVADINGVQIEVPGVDHDGCHYVKCPIKKGQHFDVKYTYSIPAILPTTKAKIIAKIIGDKGLGGCIVINGEIQD.

An N-terminal signal peptide occupies residues 1-17 (MMKTLVVLAITLAVVSA). 3 disulfides stabilise this stretch: Cys-25/Cys-134, Cys-38/Cys-43, and Cys-89/Cys-94.

This sequence belongs to the NPC2 family.

Its subcellular location is the secreted. The protein is Mite group 2 allergen Pso o 2 (ALLA) of Psoroptes ovis (Sheep scab mite).